A 60-amino-acid polypeptide reads, in one-letter code: Large ribosomal subunit protein uL30 (60 aa).

It belongs to the universal ribosomal protein uL30 family. In terms of assembly, part of the 50S ribosomal subunit.

The sequence is that of Large ribosomal subunit protein uL30 from Streptomyces filamentosus (Streptomyces roseosporus).